Consider the following 792-residue polypeptide: Xaa-Pro dipeptidyl-peptidase (792 aa).

Catalysis depends on charge relay system residues serine 363, aspartate 482, and histidine 513.

It belongs to the peptidase S15 family. Homodimer.

The protein resides in the cytoplasm. It catalyses the reaction Hydrolyzes Xaa-Pro-|- bonds to release unblocked, N-terminal dipeptides from substrates including Ala-Pro-|-p-nitroanilide and (sequentially) Tyr-Pro-|-Phe-Pro-|-Gly-Pro-|-Ile.. Functionally, removes N-terminal dipeptides sequentially from polypeptides having unsubstituted N-termini provided that the penultimate residue is proline. This is Xaa-Pro dipeptidyl-peptidase from Lactobacillus delbrueckii subsp. bulgaricus (strain ATCC BAA-365 / Lb-18).